Here is a 111-residue protein sequence, read N- to C-terminus: Ribosome-binding factor A (111 aa).

This sequence belongs to the RbfA family. In terms of assembly, monomer. Binds 30S ribosomal subunits, but not 50S ribosomal subunits or 70S ribosomes.

It is found in the cytoplasm. In terms of biological role, one of several proteins that assist in the late maturation steps of the functional core of the 30S ribosomal subunit. Associates with free 30S ribosomal subunits (but not with 30S subunits that are part of 70S ribosomes or polysomes). Required for efficient processing of 16S rRNA. May interact with the 5'-terminal helix region of 16S rRNA. The polypeptide is Ribosome-binding factor A (Helicobacter pylori (strain P12)).